The primary structure comprises 495 residues: tRNA-guanine(15) transglycosylase (495 aa).

Aspartate 83 acts as the Nucleophile in catalysis. Aspartate 118 lines the substrate pocket. Zn(2+) is bound by residues cysteine 273 and cysteine 278.

The protein belongs to the archaeosine tRNA-ribosyltransferase family. Zn(2+) serves as cofactor.

It carries out the reaction guanosine(15) in tRNA + 7-cyano-7-deazaguanine = 7-cyano-7-carbaguanosine(15) in tRNA + guanine. Its pathway is tRNA modification; archaeosine-tRNA biosynthesis. In terms of biological role, exchanges the guanine residue with 7-cyano-7-deazaguanine (preQ0) at position 15 in the dihydrouridine loop (D-loop) of archaeal tRNAs. This is tRNA-guanine(15) transglycosylase from Pyrobaculum aerophilum (strain ATCC 51768 / DSM 7523 / JCM 9630 / CIP 104966 / NBRC 100827 / IM2).